Consider the following 366-residue polypeptide: 4-hydroxy-3-methylbut-2-en-1-yl diphosphate synthase (flavodoxin) (366 aa).

[4Fe-4S] cluster is bound by residues Cys-270, Cys-273, Cys-305, and Glu-312.

Belongs to the IspG family. It depends on [4Fe-4S] cluster as a cofactor.

The enzyme catalyses (2E)-4-hydroxy-3-methylbut-2-enyl diphosphate + oxidized [flavodoxin] + H2O + 2 H(+) = 2-C-methyl-D-erythritol 2,4-cyclic diphosphate + reduced [flavodoxin]. The protein operates within isoprenoid biosynthesis; isopentenyl diphosphate biosynthesis via DXP pathway; isopentenyl diphosphate from 1-deoxy-D-xylulose 5-phosphate: step 5/6. In terms of biological role, converts 2C-methyl-D-erythritol 2,4-cyclodiphosphate (ME-2,4cPP) into 1-hydroxy-2-methyl-2-(E)-butenyl 4-diphosphate. The polypeptide is 4-hydroxy-3-methylbut-2-en-1-yl diphosphate synthase (flavodoxin) (Wigglesworthia glossinidia brevipalpis).